We begin with the raw amino-acid sequence, 443 residues long: 23S rRNA (uracil(1939)-C(5))-methyltransferase RlmD (443 aa).

Positions 4-66 (QNRFDRTSFQ…RHFDEARVVE (63 aa)) constitute a TRAM domain. Residues cysteine 79, cysteine 85, cysteine 88, and cysteine 167 each coordinate [4Fe-4S] cluster. 6 residues coordinate S-adenosyl-L-methionine: glutamine 275, phenylalanine 304, asparagine 309, glutamate 325, aspartate 352, and aspartate 373. Catalysis depends on cysteine 399, which acts as the Nucleophile.

It belongs to the class I-like SAM-binding methyltransferase superfamily. RNA M5U methyltransferase family. RlmD subfamily.

It catalyses the reaction uridine(1939) in 23S rRNA + S-adenosyl-L-methionine = 5-methyluridine(1939) in 23S rRNA + S-adenosyl-L-homocysteine + H(+). Catalyzes the formation of 5-methyl-uridine at position 1939 (m5U1939) in 23S rRNA. The polypeptide is 23S rRNA (uracil(1939)-C(5))-methyltransferase RlmD (Xylella fastidiosa (strain 9a5c)).